We begin with the raw amino-acid sequence, 545 residues long: Hydroxylamine reductase (545 aa).

Residues Cys-3, Cys-6, Cys-15, and Cys-21 each coordinate [4Fe-4S] cluster. Hybrid [4Fe-2O-2S] cluster-binding residues include His-240, Glu-264, Cys-309, Cys-401, Cys-429, Cys-454, Glu-488, and Lys-490. Cysteine persulfide is present on Cys-401.

The protein belongs to the HCP family. [4Fe-4S] cluster serves as cofactor. Hybrid [4Fe-2O-2S] cluster is required as a cofactor.

Its subcellular location is the cytoplasm. The catalysed reaction is A + NH4(+) + H2O = hydroxylamine + AH2 + H(+). Its function is as follows. Catalyzes the reduction of hydroxylamine to form NH(3) and H(2)O. In Rippkaea orientalis (strain PCC 8801 / RF-1) (Cyanothece sp. (strain PCC 8801)), this protein is Hydroxylamine reductase.